The following is a 314-amino-acid chain: E3 ubiquitin-protein ligase SINA-like 11 (314 aa).

Positions 1-12 (MEDSNSHPQNQT) are enriched in polar residues. Residues 1–31 (MEDSNSHPQNQTSKRKSSHPQKKQRMENETR) are disordered. Positions 13 to 23 (SKRKSSHPQKK) are enriched in basic residues. An RING-type; degenerate zinc finger spans residues 43-81 (CPVCFEPLTIPTFQCDDGHIVCNFCFAKVSNKCPGPGCD). The segment at 95-280 (VLESAFVPCQ…PANEVQQVTI (186 aa)) is SBD. The segment at 98-156 (SAFVPCQNTEFGCTKSVSYEKVSSHEKECNYSQCSCPNLECNYTGSYNIIYGHFMRRHL) adopts an SIAH-type zinc-finger fold. Zn(2+)-binding residues include Cys-103, Cys-110, His-122, Cys-126, Cys-133, Cys-138, His-150, and His-155.

Belongs to the SINA (Seven in absentia) family.

It catalyses the reaction S-ubiquitinyl-[E2 ubiquitin-conjugating enzyme]-L-cysteine + [acceptor protein]-L-lysine = [E2 ubiquitin-conjugating enzyme]-L-cysteine + N(6)-ubiquitinyl-[acceptor protein]-L-lysine.. It functions in the pathway protein modification; protein ubiquitination. Its function is as follows. E3 ubiquitin-protein ligase that mediates ubiquitination and subsequent proteasomal degradation of target proteins. E3 ubiquitin ligases accept ubiquitin from an E2 ubiquitin-conjugating enzyme in the form of a thioester and then directly transfers the ubiquitin to targeted substrates. It probably triggers the ubiquitin-mediated degradation of different substrates. The sequence is that of E3 ubiquitin-protein ligase SINA-like 11 from Arabidopsis thaliana (Mouse-ear cress).